A 227-amino-acid polypeptide reads, in one-letter code: uncharacterized protein (227 aa).

4 consecutive transmembrane segments (helical) span residues 17 to 37, 79 to 99, 112 to 132, and 181 to 201; these read VGIKGYLAFFLTIIFFSGVFS, GFLFALELAPSVILSLGIISI, LMTPVLKPLLGIPGICSLALI, and VAVFAFLGTSVIVPLAVILVF.

Its subcellular location is the cell membrane. This is an uncharacterized protein from Escherichia coli (strain K12).